The following is a 350-amino-acid chain: Ornithine cyclodeaminase (350 aa).

The L-ornithine site is built by Arg45 and Lys69. Residues Thr84, Arg112, 139 to 140 (AQ), Asp161, Thr202, 225 to 228 (VGGD), Lys232, and Ser293 each bind NAD(+). L-ornithine is bound at residue Arg112. Residue Asp228 coordinates L-ornithine. Asp228 serves as the catalytic Proton donor/acceptor. Val294 lines the L-ornithine pocket. Lys331 provides a ligand contact to NAD(+).

It belongs to the ornithine cyclodeaminase/mu-crystallin family. In terms of assembly, homodimer. NAD(+) is required as a cofactor.

It carries out the reaction L-ornithine = L-proline + NH4(+). The protein operates within amino-acid biosynthesis; L-proline biosynthesis; L-proline from L-ornithine: step 1/1. Its function is as follows. Catalyzes the conversion of L-ornithine into L-proline with release of ammonia. Is likely involved in the L-ornithine degradation pathway that allows P.putida to utilize this compound as sole carbon and nitrogen source. This Pseudomonas putida (strain ATCC 47054 / DSM 6125 / CFBP 8728 / NCIMB 11950 / KT2440) protein is Ornithine cyclodeaminase.